A 331-amino-acid polypeptide reads, in one-letter code: Phosphate acyltransferase (331 aa).

It belongs to the PlsX family. Homodimer. Probably interacts with PlsY.

Its subcellular location is the cytoplasm. The catalysed reaction is a fatty acyl-[ACP] + phosphate = an acyl phosphate + holo-[ACP]. Its pathway is lipid metabolism; phospholipid metabolism. Functionally, catalyzes the reversible formation of acyl-phosphate (acyl-PO(4)) from acyl-[acyl-carrier-protein] (acyl-ACP). This enzyme utilizes acyl-ACP as fatty acyl donor, but not acyl-CoA. The polypeptide is Phosphate acyltransferase (Lactococcus lactis subsp. lactis (strain IL1403) (Streptococcus lactis)).